A 110-amino-acid polypeptide reads, in one-letter code: NADH-quinone oxidoreductase subunit K (110 aa).

Transmembrane regions (helical) follow at residues 13-33 (LNHY…GLFM), 41-61 (ILMS…AFSV), and 73-93 (IIIL…LLIY).

It belongs to the complex I subunit 4L family. As to quaternary structure, NDH-1 is composed of 14 different subunits. Subunits NuoA, H, J, K, L, M, N constitute the membrane sector of the complex.

It is found in the cell inner membrane. It carries out the reaction a quinone + NADH + 5 H(+)(in) = a quinol + NAD(+) + 4 H(+)(out). Functionally, NDH-1 shuttles electrons from NADH, via FMN and iron-sulfur (Fe-S) centers, to quinones in the respiratory chain. The immediate electron acceptor for the enzyme in this species is believed to be ubiquinone. Couples the redox reaction to proton translocation (for every two electrons transferred, four hydrogen ions are translocated across the cytoplasmic membrane), and thus conserves the redox energy in a proton gradient. In Rickettsia typhi (strain ATCC VR-144 / Wilmington), this protein is NADH-quinone oxidoreductase subunit K.